We begin with the raw amino-acid sequence, 211 residues long: Potassium-transporting ATPase KdpC subunit (211 aa).

Residues 13 to 35 (VVTMVLTGLLYPLAVTGLAQLLF) form a helical membrane-spanning segment.

This sequence belongs to the KdpC family. The system is composed of three essential subunits: KdpA, KdpB and KdpC.

It is found in the cell inner membrane. In terms of biological role, part of the high-affinity ATP-driven potassium transport (or Kdp) system, which catalyzes the hydrolysis of ATP coupled with the electrogenic transport of potassium into the cytoplasm. This subunit acts as a catalytic chaperone that increases the ATP-binding affinity of the ATP-hydrolyzing subunit KdpB by the formation of a transient KdpB/KdpC/ATP ternary complex. In Myxococcus xanthus (strain DK1622), this protein is Potassium-transporting ATPase KdpC subunit.